Consider the following 511-residue polypeptide: NAD(P)H-quinone oxidoreductase subunit 2 B, chloroplastic (511 aa).

13 helical membrane passes run 24–44, 57–77, 99–119, 124–144, 149–169, 183–203, 227–247, 295–315, 323–343, 354–374, 395–415, 418–438, and 484–504; these read LLLFHGSFIFPECILIFGLIL, IPWLYFISSTSLVMSIAALLF, IFQFLILLCSTLCIPLSVEYI, MAITEFLLFVLTATLGGMFLC, LITIFVAPECFSLCSYLLSGY, YLLMGGASSSILVHGFSWLYG, PGISIALIFITVGIGFKLSPA, WHLLLEILAILSMILGNLIAI, MLAYSSIGQIGYVIIGIIVGD, YMLFYISMNLGTFACIVLFGL, ALSLALCLLSLGGLPPLAGFF, LHLFWCGWQAGLYFLVSIGLL, and MIVCVIASTIPGISMNPIIAI.

The protein belongs to the complex I subunit 2 family. As to quaternary structure, NDH is composed of at least 16 different subunits, 5 of which are encoded in the nucleus.

It is found in the plastid. The protein resides in the chloroplast thylakoid membrane. The catalysed reaction is a plastoquinone + NADH + (n+1) H(+)(in) = a plastoquinol + NAD(+) + n H(+)(out). It carries out the reaction a plastoquinone + NADPH + (n+1) H(+)(in) = a plastoquinol + NADP(+) + n H(+)(out). Its function is as follows. NDH shuttles electrons from NAD(P)H:plastoquinone, via FMN and iron-sulfur (Fe-S) centers, to quinones in the photosynthetic chain and possibly in a chloroplast respiratory chain. The immediate electron acceptor for the enzyme in this species is believed to be plastoquinone. Couples the redox reaction to proton translocation, and thus conserves the redox energy in a proton gradient. The sequence is that of NAD(P)H-quinone oxidoreductase subunit 2 B, chloroplastic from Nandina domestica (Heavenly bamboo).